Reading from the N-terminus, the 418-residue chain is 26S proteasome regulatory subunit 6B (418 aa).

N-acetylmethionine is present on Met1. The residue at position 21 (Ser21) is a Phosphoserine. A Phosphothreonine modification is found at Thr25. Residue Ser28 is modified to Phosphoserine. ATP is bound at residue 206 to 213; that stretch reads GPPGCGKT. N6-acetyllysine is present on residues Lys397 and Lys401.

This sequence belongs to the AAA ATPase family. Component of the 19S proteasome regulatory particle complex. The 26S proteasome consists of a 20S core particle (CP) and two 19S regulatory subunits (RP). The regulatory particle is made of a lid composed of 9 subunits, a base containing 6 ATPases including PSMC4 and few additional components. Interacts with NR1I3. Interacts with PAAF1. Interacts with TRIM5. Interacts with ZFAND1.

The protein resides in the cytoplasm. Its subcellular location is the nucleus. In terms of biological role, component of the 26S proteasome, a multiprotein complex involved in the ATP-dependent degradation of ubiquitinated proteins. This complex plays a key role in the maintenance of protein homeostasis by removing misfolded or damaged proteins, which could impair cellular functions, and by removing proteins whose functions are no longer required. Therefore, the proteasome participates in numerous cellular processes, including cell cycle progression, apoptosis, or DNA damage repair. PSMC4 belongs to the heterohexameric ring of AAA (ATPases associated with diverse cellular activities) proteins that unfolds ubiquitinated target proteins that are concurrently translocated into a proteolytic chamber and degraded into peptides. The polypeptide is 26S proteasome regulatory subunit 6B (Psmc4) (Mus musculus (Mouse)).